A 173-amino-acid chain; its full sequence is Lipoprotein signal peptidase (173 aa).

A run of 4 helical transmembrane segments spans residues 24–44 (PWLG…IAIL), 55–75 (ITGF…SFLA), 80–100 (WQRW…VWLL), and 105–125 (GQKL…GNVI). Catalysis depends on residues aspartate 135 and aspartate 153. A helical transmembrane segment spans residues 145-165 (HWPAFNVADCGICIGAVLLII).

The protein belongs to the peptidase A8 family.

Its subcellular location is the cell inner membrane. The enzyme catalyses Release of signal peptides from bacterial membrane prolipoproteins. Hydrolyzes -Xaa-Yaa-Zaa-|-(S,diacylglyceryl)Cys-, in which Xaa is hydrophobic (preferably Leu), and Yaa (Ala or Ser) and Zaa (Gly or Ala) have small, neutral side chains.. Its pathway is protein modification; lipoprotein biosynthesis (signal peptide cleavage). Functionally, this protein specifically catalyzes the removal of signal peptides from prolipoproteins. This chain is Lipoprotein signal peptidase, found in Ralstonia nicotianae (strain ATCC BAA-1114 / GMI1000) (Ralstonia solanacearum).